The chain runs to 1368 residues: DNA-directed RNA polymerase subunit beta' (1368 aa).

The disordered stretch occupies residues M1 to T38. Over residues P7 to A18 the composition is skewed to basic residues. Positions S19–S29 are enriched in low complexity. Residues C250, C318, C325, and C328 each contribute to the Zn(2+) site. The disordered stretch occupies residues A1340–S1368. Residues G1353–S1368 are compositionally biased toward low complexity.

It belongs to the RNA polymerase beta' chain family. RpoC2 subfamily. In cyanobacteria the RNAP catalytic core is composed of 2 alpha, 1 beta, 1 beta', 1 gamma and 1 omega subunit. When a sigma factor is associated with the core the holoenzyme is formed, which can initiate transcription. Requires Zn(2+) as cofactor.

It catalyses the reaction RNA(n) + a ribonucleoside 5'-triphosphate = RNA(n+1) + diphosphate. Its function is as follows. DNA-dependent RNA polymerase catalyzes the transcription of DNA into RNA using the four ribonucleoside triphosphates as substrates. This chain is DNA-directed RNA polymerase subunit beta', found in Synechococcus sp. (strain RCC307).